The chain runs to 251 residues: MEASANEPAMKSLKSNPSGPIPNFFVSLSSAFTQTPLVRSNKPNLLLLPPVADSVKLIQDFHQSLISATEKFKGFLHSLASKNPLFQEAVRLSSEFHILCDEIRLRNTTRVRFAMSNHGFAAVLPGDSVAGLVVANGLINFLNIYNTILVVRLVLTWFPSAPPAIVNPLSTLCDPYLNIFRGFIPPLGGLDLSPILAFLVLNAFTSSAMALPCELPSADGAVSPASSETKWVRRRRLSSHKDHRPSSASMT.

Residues 1–51 constitute a chloroplast transit peptide; the sequence is MEASANEPAMKSLKSNPSGPIPNFFVSLSSAFTQTPLVRSNKPNLLLLPPV. 2 helical membrane passes run 119–139 and 183–203; these read GFAAVLPGDSVAGLVVANGLI and FIPPLGGLDLSPILAFLVLNA. Basic residues predominate over residues 232 to 243; sequence VRRRRLSSHKDH. The segment at 232–251 is disordered; it reads VRRRRLSSHKDHRPSSASMT.

The protein belongs to the YggT family.

It localises to the plastid. Its subcellular location is the chloroplast thylakoid membrane. Its function is as follows. Not required for the biogenesis and accumulation of native cytochrome b6 in the thylakoid membrane. Not functionally involved in the pathway for covalent binding of the c-type heme to cytochrome b6. This chain is YlmG homolog protein 2, chloroplastic, found in Arabidopsis thaliana (Mouse-ear cress).